Here is a 64-residue protein sequence, read N- to C-terminus: Large ribosomal subunit protein bL33 (64 aa).

This sequence belongs to the bacterial ribosomal protein bL33 family.

This Synechococcus sp. (strain WH7803) protein is Large ribosomal subunit protein bL33.